Reading from the N-terminus, the 383-residue chain is GA-binding protein subunit beta-1 (383 aa).

S2 bears the N-acetylserine mark. 2 ANK repeats span residues 5-34 and 37-66; these read DLGK…PFTT and LGTS…SRDA. Position 69 is an N6-acetyllysine (K69). 3 ANK repeats span residues 70 to 99, 103 to 132, and 136 to 166; these read VDRT…DVNA, LKMT…DVHT, and FCKT…QINT. Residues K340 and K369 each carry the N6-acetyllysine modification.

As to quaternary structure, heterotetramer of two alpha and two beta subunits. Interacts with HCFC1, causing repression of transcriptional activity. Acetylated by EP300/p300. Deacetylated by SIRT7, promoting heterotetramerization and activity.

It is found in the nucleus. Transcription factor capable of interacting with purine rich repeats (GA repeats). Acts as a master regulator of nuclear-encoded mitochondrial genes. The sequence is that of GA-binding protein subunit beta-1 (GABPB1) from Bos taurus (Bovine).